Consider the following 63-residue polypeptide: Conotoxin Tx-D0111 (63 aa).

A signal peptide spans 1–19; it reads MRCLPVFVILLLLIASTPS. Residues 20 to 47 constitute a propeptide that is removed on maturation; sequence DTVPLKTKDDMPQASFHGNARRTLQMLS.

The protein belongs to the conotoxin T superfamily. In terms of processing, contains 2 disulfide bonds that can be either 'C1-C3, C2-C4' or 'C1-C4, C2-C3', since these disulfide connectivities have been observed for conotoxins with cysteine framework V (for examples, see AC P0DQQ7 and AC P81755). In terms of tissue distribution, expressed by the venom duct.

It is found in the secreted. In Conus textile (Cloth-of-gold cone), this protein is Conotoxin Tx-D0111.